Reading from the N-terminus, the 467-residue chain is Gamma-aminobutyric acid receptor subunit rho-3 (467 aa).

Residues 1–24 form the signal peptide; that stretch reads MVLAFQLVSFTYIWIILKPNVCAA. Residues 25-266 lie on the Extracellular side of the membrane; the sequence is SNIKMTHQRC…LFINFVLRRH (242 aa). 4-aminobutanoate contacts are provided by Arg111 and Ser175. A disulfide bridge links Cys184 with Cys198. Residue Glu203 participates in 4-aminobutanoate binding. An N-linked (GlcNAc...) asparagine glycan is attached at Asn220. Residues 267-287 form a helical membrane-spanning segment; that stretch reads VFFFVLQTYFPAILMVMLSWV. Over 288–299 the chain is Cytoplasmic; it reads SFWIDRRAVPAR. A helical membrane pass occupies residues 300–320; that stretch reads VSLGITTVLTMSTIITAVSAS. Residues 321-331 lie on the Extracellular side of the membrane; it reads MPQVSYLKAVD. Residues 332–352 form a helical membrane-spanning segment; the sequence is VYLWVSSLFVFLSVIEYAAVN. The tract at residues 347–448 is interaction with SQSTM1; sequence EYAAVNYLTT…NNHVIDTYSR (102 aa). At 353-446 the chain is on the cytoplasmic side; it reads YLTTVEERKQ…LENNHVIDTY (94 aa). Residues 447 to 467 form a helical membrane-spanning segment; that stretch reads SRILFPIVYILFNLFYWGVYV.

The protein belongs to the ligand-gated ion channel (TC 1.A.9) family. Gamma-aminobutyric acid receptor (TC 1.A.9.5) subfamily. GABRR3 sub-subfamily. Three rho subunits (rho-1/GBRR1, rho-2/GBRR2 and rho-3/GBRR3) coassemble either to form functional homopentamers or heteropentamers. Forms a ternary complex with SQSTM1 and PRKCZ.

It localises to the postsynaptic cell membrane. Its subcellular location is the cell membrane. The enzyme catalyses chloride(in) = chloride(out). With respect to regulation, inhibited by TPMPA, a rho-specific antagonist, when forming a homopentamer. Functionally, rho subunit of the pentameric ligand-gated chloride channels responsible for mediating the effects of gamma-aminobutyric acid (GABA), the major inhibitory neurotransmitter in the brain. Rho-containing GABA-gated chloride channels are a subclass of GABA(A) receptors (GABAARs) entirely composed of rho subunits, where GABA molecules bind at the rho intersubunit interfaces. When activated by GABA, rho-GABAARs selectively allow the flow of chloride anions across the cell membrane down their electrochemical gradient. The protein is Gamma-aminobutyric acid receptor subunit rho-3 of Homo sapiens (Human).